Reading from the N-terminus, the 100-residue chain is Putative pterin-4-alpha-carbinolamine dehydratase (100 aa).

Belongs to the pterin-4-alpha-carbinolamine dehydratase family.

It carries out the reaction (4aS,6R)-4a-hydroxy-L-erythro-5,6,7,8-tetrahydrobiopterin = (6R)-L-erythro-6,7-dihydrobiopterin + H2O. The chain is Putative pterin-4-alpha-carbinolamine dehydratase from Rhodopseudomonas palustris (strain TIE-1).